Reading from the N-terminus, the 245-residue chain is Demethylmenaquinone methyltransferase (245 aa).

S-adenosyl-L-methionine contacts are provided by residues Thr62, Asp80, 105-106 (DA), and Ser122.

This sequence belongs to the class I-like SAM-binding methyltransferase superfamily. MenG/UbiE family.

The enzyme catalyses a 2-demethylmenaquinol + S-adenosyl-L-methionine = a menaquinol + S-adenosyl-L-homocysteine + H(+). It participates in quinol/quinone metabolism; menaquinone biosynthesis; menaquinol from 1,4-dihydroxy-2-naphthoate: step 2/2. Functionally, methyltransferase required for the conversion of demethylmenaquinol (DMKH2) to menaquinol (MKH2). The sequence is that of Demethylmenaquinone methyltransferase from Clavibacter sepedonicus (Clavibacter michiganensis subsp. sepedonicus).